The following is a 208-amino-acid chain: Putative archaetidylserine decarboxylase proenzyme (208 aa).

The Schiff-base intermediate with substrate; via pyruvic acid role is filled by Ser-172. Ser-172 carries the post-translational modification Pyruvic acid (Ser); by autocatalysis.

The protein belongs to the phosphatidylserine decarboxylase family. PSD-A subfamily. As to quaternary structure, heterodimer of a large membrane-associated beta subunit and a small pyruvoyl-containing alpha subunit. Pyruvate serves as cofactor. Post-translationally, is synthesized initially as an inactive proenzyme. Formation of the active enzyme involves a self-maturation process in which the active site pyruvoyl group is generated from an internal serine residue via an autocatalytic post-translational modification. Two non-identical subunits are generated from the proenzyme in this reaction, and the pyruvate is formed at the N-terminus of the alpha chain, which is derived from the carboxyl end of the proenzyme. The post-translation cleavage follows an unusual pathway, termed non-hydrolytic serinolysis, in which the side chain hydroxyl group of the serine supplies its oxygen atom to form the C-terminus of the beta chain, while the remainder of the serine residue undergoes an oxidative deamination to produce ammonia and the pyruvoyl prosthetic group on the alpha chain.

The protein resides in the cell membrane. It carries out the reaction archaetidylserine + H(+) = archaetidylethanolamine + CO2. In terms of biological role, catalyzes the formation of archaetidylethanolamine (PtdEtn) from archaetidylserine (PtdSer). This chain is Putative archaetidylserine decarboxylase proenzyme, found in Methanosarcina mazei (strain ATCC BAA-159 / DSM 3647 / Goe1 / Go1 / JCM 11833 / OCM 88) (Methanosarcina frisia).